Here is a 473-residue protein sequence, read N- to C-terminus: UDP-N-acetylmuramate--L-alanine ligase (473 aa).

ATP is bound at residue 115-121 (GTHGKTT).

The protein belongs to the MurCDEF family.

Its subcellular location is the cytoplasm. The catalysed reaction is UDP-N-acetyl-alpha-D-muramate + L-alanine + ATP = UDP-N-acetyl-alpha-D-muramoyl-L-alanine + ADP + phosphate + H(+). It functions in the pathway cell wall biogenesis; peptidoglycan biosynthesis. Functionally, cell wall formation. This Rhizorhabdus wittichii (strain DSM 6014 / CCUG 31198 / JCM 15750 / NBRC 105917 / EY 4224 / RW1) (Sphingomonas wittichii) protein is UDP-N-acetylmuramate--L-alanine ligase.